The sequence spans 584 residues: MGKKGKKEKKGRGAEKTAAKMEKKVSKRSRKEEEDLEALIAHFQTLDAKKTQVTETPCPPPSPRLNASLSAHPEKDELILFGGEYFNGQKTFMYNELYIYSIRKDTWTKVDIPGPPPRRCAHQAVVVPQGGGQLWVFGGEFASPDGEQFYHYKDLWVLHLATKTWEQIRSTGGPSGRSGHRMVAWKRQLILFGGFHESARDYIYYSDVYTFSLDTFQWSKLSPSGAGPTPRSGCLMAVTPQGSIAIYGGYSKQRVKKDVDKGTQHSDMFLLKPAEGGEGKWAWTRINPSGVKPTARSGFSVAVAPNHQILVFGGVCDEEEEESLEGSFFSDLYIYDAAKSRWFAAQLKGPKSEKKKRRRGKAEDPEGTTEQETGGSSAPEPLEVIKEVVSEDGTVVTIKQVLTPSGLGVQPSPKADDSASEASSTGQEPCPRSNAMLAVKHGLLYVYGGMFEAGDRQVTLSDLYCLDLHKMEEWKTLVEMDPKSQEWLEESDSEEDSSSDEESEDGEDKDQEDSAEEGADPQHPEVARGEQFEEYLSRTEQHWLKLARSHVGPEAKEKKVLKVAQAMAKSCFDDAVQDIAQARH.

The span at 1–10 (MGKKGKKEKK) shows a compositional bias: basic residues. 2 disordered regions span residues 1 to 33 (MGKKGKKEKKGRGAEKTAAKMEKKVSKRSRKEE) and 50 to 69 (KTQVTETPCPPPSPRLNASL). Basic and acidic residues predominate over residues 11-24 (GRGAEKTAAKMEKK). 5 Kelch repeats span residues 77 to 129 (ELIL…VVPQ), 133 to 187 (QLWV…AWKR), 188 to 238 (QLIL…LMAV), 243 to 289 (SIAI…INPS), and 308 to 361 (QILV…RRGK). Disordered regions lie at residues 348-381 (KGPKSEKKKRRRGKAEDPEGTTEQETGGSSAPEP), 405-433 (SGLGVQPSPKADDSASEASSTGQEPCPRS), and 482-533 (PKSQ…EQFE). The residue at position 418 (S418) is a Phosphoserine. Residues 443-494 (LLYVYGGMFEAGDRQVTLSDLYCLDLHKMEEWKTLVEMDPKSQEWLEESDSE) form a Kelch 6 repeat. Residues 487–519 (WLEESDSEEDSSSDEESEDGEDKDQEDSAEEGA) are compositionally biased toward acidic residues. Residues 520–533 (DPQHPEVARGEQFE) show a composition bias toward basic and acidic residues.

The chain is Kelch domain-containing protein 4 (Klhdc4) from Mus musculus (Mouse).